Consider the following 388-residue polypeptide: F-box protein ETP2 (388 aa).

Residues 2–48 form the F-box domain; it reads KTIQEQLPNDLVEEILCRVPATSLRRLRSTCKAWNRLFKGDRILASK.

Interacts with EIN2 (via C-terminus).

In terms of biological role, negative regulator of EIN2 protein stability. In Arabidopsis thaliana (Mouse-ear cress), this protein is F-box protein ETP2.